The sequence spans 313 residues: Pre-mRNA-splicing factor 38A (313 aa).

The tract at residues 1–179 (MANRTVKDAN…VLEEAELLDP (179 aa)) is N-terminal protein interaction domain. Residues 172–201 (EEAELLDPRISALEEDLDEVETSEEEDDED) adopt a coiled-coil conformation. Positions 182–313 (SALEEDLDEV…SHKRSRRGNE (132 aa)) are disordered. Over residues 184-202 (LEEDLDEVETSEEEDDEDE) the composition is skewed to acidic residues. The span at 203 to 224 (KPERMQSPEPHRRSYRDMDRPR) shows a compositional bias: basic and acidic residues. Basic residues-rich tracts occupy residues 225 to 250 (RSPS…RSPS), 260 to 294 (HRSK…RSHS), and 302 to 313 (KKSHKRSRRGNE).

This sequence belongs to the PRP38 family. Component of the spliceosome B complex.

Its subcellular location is the nucleus. Involved in pre-mRNA splicing as a component of the spliceosome. This chain is Pre-mRNA-splicing factor 38A (prpf38a), found in Danio rerio (Zebrafish).